Reading from the N-terminus, the 754-residue chain is Endothelin-converting enzyme 1 (754 aa).

At 1 to 52 (MMSTYKRATLDEEDLVDSLSESDVYPNHLQVNFRGPRNGQRCWAARTPVEKR) the chain is on the cytoplasmic side. Thr9 is subject to Phosphothreonine. Residues 53–73 (LVVLVALLAAALVACLAVLGI) traverse the membrane as a helical; Signal-anchor for type II membrane protein segment. Over 74–754 (QYQTRTPSVC…MNPHHKCEVW (681 aa)) the chain is Extracellular. Residues 82-754 (VCLSEACISV…MNPHHKCEVW (673 aa)) enclose the Peptidase M13 domain. Cystine bridges form between Cys83–Cys88, Cys106–Cys739, Cys114–Cys699, Cys169–Cys419, and Cys628–Cys751. N-linked (GlcNAc...) asparagine glycosylation is found at Asn150, Asn171, Asn194, Asn254, Asn300, Asn346, Asn367, and Asn523. A Zn(2+)-binding site is contributed by His591. The active site involves Glu592. His595 is a binding site for Zn(2+). 2 N-linked (GlcNAc...) asparagine glycosylation sites follow: Asn616 and Asn635. Residue Glu651 coordinates Zn(2+). The active-site Proton donor is Asp655.

It belongs to the peptidase M13 family. As to quaternary structure, homodimer; disulfide-linked. Interacts with PPP1R16B. Interacts with TSPAN8; this interaction recruits the endothelin converting enzyme ECE1 to tetraspanin-enriched microdomains and positively modulates its enzymatic activity. It depends on Zn(2+) as a cofactor.

The protein localises to the cell membrane. The catalysed reaction is Hydrolysis of the 21-Trp-|-Val-22 bond in big endothelin to form endothelin 1.. With respect to regulation, inhibited by phosphoramidon. Converts big endothelin-1 to endothelin-1. The protein is Endothelin-converting enzyme 1 (ECE1) of Bos taurus (Bovine).